Here is a 152-residue protein sequence, read N- to C-terminus: MTITDLVLILFIAALLAYALYDQFIMPRRNGPTLLSIALLHRGRVDSVIFVGLVAILIYNNVTSHGAQMTTWLLSALALMGFYIFWIRTPRIIFKQRGFFFANVWIEYNRIKEMNLSEDGVLVMQLEQRRLLIRVRNIDDLEKIYKLLIENQ.

A run of 3 helical transmembrane segments spans residues 6–26 (LVLI…QFIM), 45–65 (VDSV…VTSH), and 67–87 (AQMT…IFWI).

This sequence belongs to the UPF0266 family.

It localises to the cell inner membrane. The sequence is that of UPF0266 membrane protein YobD from Salmonella paratyphi B (strain ATCC BAA-1250 / SPB7).